Consider the following 23-residue polypeptide: Acidic phospholipase CHA-E6a (23 aa).

It belongs to the phospholipase A2 family. Group II subfamily. D49 sub-subfamily. The cofactor is Ca(2+). Contains 7 disulfide bonds. In terms of tissue distribution, expressed by the venom gland.

Its subcellular location is the secreted. It carries out the reaction a 1,2-diacyl-sn-glycero-3-phosphocholine + H2O = a 1-acyl-sn-glycero-3-phosphocholine + a fatty acid + H(+). Its function is as follows. Snake venom phospholipase A2 (PLA2) that shows high lipolytic (1048 umol/mg/min) and weak ADP-induced platelet aggregation activities. Also shows weak anticoagulant activity (IC(50) is less than 1.0 uM). PLA2 catalyzes the calcium-dependent hydrolysis of the 2-acyl groups in 3-sn-phosphoglycerides. This is Acidic phospholipase CHA-E6a from Crotalus horridus (Timber rattlesnake).